Consider the following 172-residue polypeptide: Large ribosomal subunit protein bL17 (172 aa).

The span at Leu-140–Pro-160 shows a compositional bias: basic and acidic residues. The disordered stretch occupies residues Leu-140 to Asn-172.

This sequence belongs to the bacterial ribosomal protein bL17 family. In terms of assembly, part of the 50S ribosomal subunit. Contacts protein L32.

This is Large ribosomal subunit protein bL17 from Leptospira biflexa serovar Patoc (strain Patoc 1 / Ames).